A 361-amino-acid polypeptide reads, in one-letter code: Septin-2 (361 aa).

Residue Y17 is modified to Phosphotyrosine. In terms of domain architecture, Septin-type G spans 34-306 (KGFEFTLMVV…ENFRSERLKR (273 aa)). A G1 motif region spans residues 44–51 (GESGLGKS). Residues 44-51 (GESGLGKS), T78, G104, and 183-191 (KADTLTLKE) contribute to the GTP site. Positions 101 to 104 (DTPG) are G3 motif. Residues 182–185 (AKAD) form a G4 motif region. N6-acetyllysine is present on K190. Residue Y211 is modified to Phosphotyrosine. Phosphoserine is present on S218. GTP-binding residues include G241 and R256. Residues 260–270 (WGVVEVENPEH) are important for dimerization.

It belongs to the TRAFAC class TrmE-Era-EngA-EngB-Septin-like GTPase superfamily. Septin GTPase family. In terms of assembly, septins polymerize into heterooligomeric protein complexes that form filaments, and associate with cellular membranes, actin filaments and microtubules. GTPase activity is required for filament formation. Filaments are assembled from asymmetrical heterotrimers, composed of SEPTIN2, SEPTIN6 and SEPTIN7 that associate head-to-head to form a hexameric unit. Interaction between SEPTIN2 and SEPTIN7 seems indirect. Interacts with SEPTIN5. Interaction with SEPTIN4 not detected. Interacts with SEPTIN9. Component of a septin core octameric complex consisting of SEPTIN12, SEPTIN7, SEPTIN6 and SEPTIN2 or SEPTIN4 in the order 12-7-6-2-2-6-7-12 or 12-7-6-4-4-6-7-12 and located in the sperm annulus. Interacts with MAP4. Interacts with DZIP1L.

It localises to the cytoplasm. Its subcellular location is the cytoskeleton. The protein localises to the spindle. The protein resides in the chromosome. It is found in the centromere. It localises to the kinetochore. Its subcellular location is the cleavage furrow. The protein localises to the midbody. The protein resides in the cell cortex. It is found in the cell projection. It localises to the cilium membrane. Its subcellular location is the cilium. The protein localises to the flagellum. Functionally, filament-forming cytoskeletal GTPase. Forms a filamentous structure with SEPTIN12, SEPTIN6, SEPTIN2 and probably SEPTIN4 at the sperm annulus which is required for the structural integrity and motility of the sperm tail during postmeiotic differentiation. Required for normal organization of the actin cytoskeleton. Plays a role in the biogenesis of polarized columnar-shaped epithelium by maintaining polyglutamylated microtubules, thus facilitating efficient vesicle transport, and by impeding MAP4 binding to tubulin. Required for the progression through mitosis. Forms a scaffold at the midplane of the mitotic splindle required to maintain CENPE localization at kinetochores and consequently chromosome congression. During anaphase, may be required for chromosome segregation and spindle elongation. Plays a role in ciliogenesis and collective cell movements. In cilia, required for the integrity of the diffusion barrier at the base of the primary cilium that prevents diffusion of transmembrane proteins between the cilia and plasma membranes: probably acts by regulating the assembly of the tectonic-like complex (also named B9 complex) by localizing TMEM231 protein. The sequence is that of Septin-2 from Bos taurus (Bovine).